The primary structure comprises 245 residues: Photosystem II protein PSBS2 (245 aa).

The transit peptide at M1 to Y25 directs the protein to the chloroplast. The next 4 membrane-spanning stretches (helical) occupy residues L72–T92, G108–L128, L185–F205, and E217–G237.

This sequence belongs to the ELIP/psbS family.

Its subcellular location is the plastid. The protein resides in the chloroplast thylakoid membrane. Its function is as follows. Required for non-photochemical quenching (NPQ), a mechanism that converts and dissipates the harmful excess absorbed light energy into heat and protect the photosynthetic apparatus from photo-oxidative damage. Seems involved in the activation of NPQ, possibly by promoting conformational changes required for activation of LHCSR3-dependent quenching in the antenna of photosystem II (PSII). The protein is Photosystem II protein PSBS2 of Chlamydomonas reinhardtii (Chlamydomonas smithii).